Here is a 232-residue protein sequence, read N- to C-terminus: Small ribosomal subunit protein uS3 (232 aa).

A KH type-2 domain is found at 39–107 (IREILHKELK…DVVINIVEIR (69 aa)).

The protein belongs to the universal ribosomal protein uS3 family. As to quaternary structure, part of the 30S ribosomal subunit. Forms a tight complex with proteins S10 and S14.

Functionally, binds the lower part of the 30S subunit head. Binds mRNA in the 70S ribosome, positioning it for translation. The chain is Small ribosomal subunit protein uS3 from Rhodopseudomonas palustris (strain HaA2).